Reading from the N-terminus, the 75-residue chain is Metallothionein-like protein 1 (75 aa).

Belongs to the metallothionein superfamily. Type 15 family.

Functionally, metallothioneins have a high content of cysteine residues that bind various heavy metals. The protein is Metallothionein-like protein 1 (MT1B) of Trifolium repens (Creeping white clover).